A 170-amino-acid polypeptide reads, in one-letter code: MRVEGQLGDEVVTIKATSIARRLHGKSHYGKMYEDRLQLSLIEAAYLMERGKLKLMKDDDEVSPEEFISLLGERGLYSKYLVYRDLRNRGYIVKTGFKYGAEFRLYERGGAPGRTHSAYLVRVISENDTIHALDFSSYVRVAHGVNKKLLMAFLDDEEDITYYLVDWIRP.

Active-site residues include Y106, H116, and K147.

This sequence belongs to the tRNA-intron endonuclease family. Archaeal short subfamily. As to quaternary structure, homotetramer; although the tetramer contains four active sites, only two participate in the cleavage. Therefore, it should be considered as a dimer of dimers.

It carries out the reaction pretRNA = a 3'-half-tRNA molecule with a 5'-OH end + a 5'-half-tRNA molecule with a 2',3'-cyclic phosphate end + an intron with a 2',3'-cyclic phosphate and a 5'-hydroxyl terminus.. In terms of biological role, endonuclease that removes tRNA introns. Cleaves pre-tRNA at the 5'- and 3'-splice sites to release the intron. The products are an intron and two tRNA half-molecules bearing 2',3' cyclic phosphate and 5'-OH termini. Recognizes a pseudosymmetric substrate in which 2 bulged loops of 3 bases are separated by a stem of 4 bp. This Methanothermobacter thermautotrophicus (strain ATCC 29096 / DSM 1053 / JCM 10044 / NBRC 100330 / Delta H) (Methanobacterium thermoautotrophicum) protein is tRNA-splicing endonuclease.